Reading from the N-terminus, the 101-residue chain is Putative septation protein SpoVG (101 aa).

A disordered region spans residues 82-101 (ELKKGGAAPARATGTDPHED).

This sequence belongs to the SpoVG family.

Could be involved in septation. The sequence is that of Putative septation protein SpoVG from Anaeromyxobacter dehalogenans (strain 2CP-1 / ATCC BAA-258).